Reading from the N-terminus, the 250-residue chain is Prolactin-7A2 (250 aa).

An N-terminal signal peptide occupies residues Met1 to Ser29. 4 N-linked (GlcNAc...) asparagine glycosylation sites follow: Asn26, Asn35, Asn102, and Asn134. 2 disulfides stabilise this stretch: Cys100-Cys215 and Cys232-Cys241.

It belongs to the somatotropin/prolactin family. As to expression, expression restricted to placental tissues. Trophoblast giant cells are found to be the major source.

Its subcellular location is the secreted. This chain is Prolactin-7A2 (Prl7a2), found in Rattus norvegicus (Rat).